Here is an 83-residue protein sequence, read N- to C-terminus: Hainantoxin-III 7 (83 aa).

A signal peptide spans Met1–Ala21. The propeptide occupies Ser22–Arg48. Disulfide bonds link Cys50/Cys65, Cys57/Cys70, and Cys64/Cys77. Leucine amide is present on Leu81.

It belongs to the neurotoxin 10 (Hwtx-1) family. 15 (Hntx-3) subfamily. In terms of assembly, monomer. As to expression, expressed by the venom gland.

The protein resides in the secreted. Selective antagonist of neuronal tetrodotoxin (TTX)-sensitive voltage-gated sodium channels (IC(50)=1270 nM on Nav1.1/SCN1A, 270 nM on Nav1.2/SCN2A, 491 nM on Nav1.3/SCN3A and 232 nM on Nav1.7/SCN9A). This toxin suppress Nav1.7 current amplitude without significantly altering the activation, inactivation, and repriming kinetics. Short extreme depolarizations partially activate the toxin-bound channel, indicating voltage-dependent inhibition of this toxin. This toxin increases the deactivation of the Nav1.7 current after extreme depolarizations. The toxin-Nav1.7 complex is gradually dissociated upon prolonged strong depolarizations in a voltage-dependent manner, and the unbound toxin rebinds to Nav1.7 after a long repolarization. Moreover, analysis of chimeric channels showed that the DIIS3-S4 linker is critical for toxin binding to Nav1.7. These data are consistent with this toxin interacting with Nav1.7 site 4 and trapping the domain II voltage sensor in the closed state. The protein is Hainantoxin-III 7 of Cyriopagopus hainanus (Chinese bird spider).